The primary structure comprises 394 residues: MSSEQREGSQETTTTTVEGNGTIAGQNSHSAAPTTLRATSTMVSCQRLRLNPNNEHRPDSYEDLQLDFPNSVYSSLEKYLPPNMLVSNRDEKIKFMTDIMLRHLPHGERSRAQRHSDYRLKITTNYQPLHKELYTLVPTVCFVPAFLKAINENTEESFRNIISEPSPGVFVFDMLQPSFCEMMLAEIDNFERWVGETKFRIMRPNTMNKYGAVLDDFGLDTMLDKLMEGFIRPISKVFFSDVGGATLDSHHGFVVEYGKDRDVDLGFHVDDSEVTLNVCLGNQFVGGELFFRGTRCEKHVNTATKADETYDYCHIPGQAVLHRGRHRHGARATTCGHRVNMLLWCRSSVFRELKTHHKDFSSWCGECFCEKRDEKVRSIDALRKKLFKPRQTQA.

The interval 1–35 (MSSEQREGSQETTTTTVEGNGTIAGQNSHSAAPTT) is disordered. Polar residues predominate over residues 17–35 (VEGNGTIAGQNSHSAAPTT). The Fe2OG dioxygenase domain occupies 248–347 (DSHHGFVVEY…RVNMLLWCRS (100 aa)). Residues histidine 268, aspartate 270, and histidine 328 each contribute to the Fe cation site. Arginine 338 contacts 2-oxoglutarate.

Fe(2+) serves as cofactor. L-ascorbate is required as a cofactor. As to expression, expressed in roots, cotyledons, rosette leaves, cauline leaves, inflorescences and siliques.

It localises to the nucleus. It is found in the nucleoplasm. Participates in the epigenetic repression of flowering genes in association with ICU11. Functions in the repression of several members of the MADS-box transcription factors family, including SEP3, during vegetative development via histone modification. This chain is 2-oxoglutarate and iron-dependent oxygenase domain-containing protein CP2, found in Arabidopsis thaliana (Mouse-ear cress).